The chain runs to 484 residues: Poly(A) polymerase alpha-B (484 aa).

Residues 240–257 carry the Nuclear localization signal 1 motif; the sequence is RKQLHQLLPSHVLPKKKK. Disordered regions lie at residues 276–314, 326–356, and 375–484; these read SVDSDNSMSVPSPTNATRTSPLNSTGLSQGNSPATPVSL, VPQNNSTENSGGSLNESIPETATHPAFSSTP, and KPVT…RLNR. The Nuclear localization signal 2 signature appears at 392–407; it reads KRTSSPTNEESPKKTK. The segment covering 423 to 441 has biased composition (basic and acidic residues); that stretch reads EQNKLEPEELKEVHSEEKS. A compositionally biased stretch (low complexity) spans 451 to 464; sequence SSQRSSSTDLSDIS.

It belongs to the poly(A) polymerase family. Monomer.

Its subcellular location is the nucleus. The enzyme catalyses RNA(n) + ATP = RNA(n)-3'-adenine ribonucleotide + diphosphate. In terms of biological role, polymerase that creates the 3'-poly(A) tail of mRNA's. May acquire specificity through interaction with a cleavage and polyadenylation factor (CPSF). The chain is Poly(A) polymerase alpha-B (papola-b) from Xenopus laevis (African clawed frog).